We begin with the raw amino-acid sequence, 59 residues long: Mitochondrial sheath formation-associated protein (59 aa).

At 1 to 6 (MIVLGW) the chain is on the mitochondrial intermembrane side. 2 helical membrane-spanning segments follow: residues 2 to 22 (IVLGWMFFVGLVCYMGTFPEL) and 7 to 23 (MFFVGLVCYMGTFPELM). Residues 24–40 (PPTLKWQERWPVQESKT) lie on the Cytoplasmic side of the membrane.

As to quaternary structure, interacts with VDAC3.

The protein localises to the mitochondrion outer membrane. Regulates sperm development. May be involved in mitochondrial sheath formation. The protein is Mitochondrial sheath formation-associated protein of Homo sapiens (Human).